The following is a 249-amino-acid chain: Ditrans,polycis-undecaprenyl-diphosphate synthase ((2E,6E)-farnesyl-diphosphate specific) (249 aa).

The active site involves Asp29. Asp29 contacts Mg(2+). Substrate-binding positions include 30 to 33, Trp34, Arg42, His46, and 74 to 76; these read GNGR and STE. Asn77 acts as the Proton acceptor in catalysis. Substrate contacts are provided by residues Trp78, Arg80, Arg197, and 203–205; that span reads RLS. Glu216 is a binding site for Mg(2+).

The protein belongs to the UPP synthase family. In terms of assembly, homodimer. It depends on Mg(2+) as a cofactor.

It catalyses the reaction 8 isopentenyl diphosphate + (2E,6E)-farnesyl diphosphate = di-trans,octa-cis-undecaprenyl diphosphate + 8 diphosphate. In terms of biological role, generates ditrans,octacis-undecaprenyl pyrophosphate (UPP) from isopentenyl pyrophosphate (IPP) and farnesyl diphosphate. UPP is the precursor of glycosyl carrier lipid in the biosynthesis of bacterial cell wall polysaccharide components such as peptidoglycan and lipopolysaccharide. This Micrococcus luteus (Micrococcus lysodeikticus) protein is Ditrans,polycis-undecaprenyl-diphosphate synthase ((2E,6E)-farnesyl-diphosphate specific) (uppS).